The chain runs to 436 residues: Na(+)/H(+) antiporter NhaA (436 aa).

11 consecutive transmembrane segments (helical) span residues 14-34 (AGGIVLIAATILTLILSNSTW), 59-79 (LHHWINDGLMAVFFFVVGLEL), 95-115 (ALPVIAALGGMLAPALIYHQF), 125-145 (WGIPMATDIAFAIGILVLLAW), 152-172 (IIFLTALAIADDLGAVLVIAI), 176-196 (PALHIKALMIAALLLLALLLF), 214-234 (FWYFVILSGIHATVAGIFLAF), 300-320 (AIQPWVTFAVLPVFALANAGI), 336-356 (IGTCLGLVLGKFLGIGLSSWL), 374-394 (LLGAAWLGGIGFTMSLFIGQL), and 407-427 (LGILLASLIAASIGLLWLFQV).

This sequence belongs to the NhaA Na(+)/H(+) (TC 2.A.33) antiporter family.

It localises to the cell inner membrane. It catalyses the reaction Na(+)(in) + 2 H(+)(out) = Na(+)(out) + 2 H(+)(in). Na(+)/H(+) antiporter that extrudes sodium in exchange for external protons. The protein is Na(+)/H(+) antiporter NhaA of Acidithiobacillus ferrooxidans (strain ATCC 23270 / DSM 14882 / CIP 104768 / NCIMB 8455) (Ferrobacillus ferrooxidans (strain ATCC 23270)).